A 505-amino-acid polypeptide reads, in one-letter code: Putative thymidine phosphorylase (505 aa).

It belongs to the thymidine/pyrimidine-nucleoside phosphorylase family. Type 2 subfamily.

It carries out the reaction thymidine + phosphate = 2-deoxy-alpha-D-ribose 1-phosphate + thymine. The polypeptide is Putative thymidine phosphorylase (Parvibaculum lavamentivorans (strain DS-1 / DSM 13023 / NCIMB 13966)).